Reading from the N-terminus, the 151-residue chain is Large ribosomal subunit protein eL8 (151 aa).

This sequence belongs to the eukaryotic ribosomal protein eL8 family. Part of the 50S ribosomal subunit. Probably part of the RNase P complex.

It localises to the cytoplasm. In terms of biological role, multifunctional RNA-binding protein that recognizes the K-turn motif in ribosomal RNA, the RNA component of RNase P, box H/ACA, box C/D and box C'/D' sRNAs. The sequence is that of Large ribosomal subunit protein eL8 from Pyrobaculum aerophilum (strain ATCC 51768 / DSM 7523 / JCM 9630 / CIP 104966 / NBRC 100827 / IM2).